Reading from the N-terminus, the 239-residue chain is ATP-dependent dethiobiotin synthetase BioD (239 aa).

15–20 (EIGKTF) serves as a coordination point for ATP. Residue Thr19 coordinates Mg(2+). Lys40 is an active-site residue. Residues Asp57, 118–121 (EGVG), and 178–179 (NH) contribute to the ATP site. Asp57 and Glu118 together coordinate Mg(2+).

The protein belongs to the dethiobiotin synthetase family. As to quaternary structure, homodimer. The cofactor is Mg(2+).

The protein resides in the cytoplasm. The catalysed reaction is (7R,8S)-7,8-diammoniononanoate + CO2 + ATP = (4R,5S)-dethiobiotin + ADP + phosphate + 3 H(+). The protein operates within cofactor biosynthesis; biotin biosynthesis; biotin from 7,8-diaminononanoate: step 1/2. In terms of biological role, catalyzes a mechanistically unusual reaction, the ATP-dependent insertion of CO2 between the N7 and N8 nitrogen atoms of 7,8-diaminopelargonic acid (DAPA, also called 7,8-diammoniononanoate) to form a ureido ring. The chain is ATP-dependent dethiobiotin synthetase BioD from Burkholderia cenocepacia (strain ATCC BAA-245 / DSM 16553 / LMG 16656 / NCTC 13227 / J2315 / CF5610) (Burkholderia cepacia (strain J2315)).